The following is a 275-amino-acid chain: Putative phosphoenolpyruvate synthase regulatory protein (275 aa).

157 to 164 (GVSRCGKT) provides a ligand contact to ADP.

Belongs to the pyruvate, phosphate/water dikinase regulatory protein family. PSRP subfamily.

It carries out the reaction [pyruvate, water dikinase] + ADP = [pyruvate, water dikinase]-phosphate + AMP + H(+). The enzyme catalyses [pyruvate, water dikinase]-phosphate + phosphate + H(+) = [pyruvate, water dikinase] + diphosphate. Functionally, bifunctional serine/threonine kinase and phosphorylase involved in the regulation of the phosphoenolpyruvate synthase (PEPS) by catalyzing its phosphorylation/dephosphorylation. This chain is Putative phosphoenolpyruvate synthase regulatory protein, found in Bordetella pertussis (strain Tohama I / ATCC BAA-589 / NCTC 13251).